The primary structure comprises 333 residues: NADH-quinone oxidoreductase subunit H (333 aa).

A run of 8 helical transmembrane segments spans residues 17 to 37 (IFFA…TYGI), 88 to 108 (FILA…ALPF), 117 to 137 (IGVG…GVVT), 159 to 179 (ISYE…SGSL), 191 to 211 (VWFI…AVAE), 241 to 261 (FFML…TVLF), 273 to 293 (FIPG…LFIW), and 313 to 333 (VLLP…QLFF).

This sequence belongs to the complex I subunit 1 family. NDH-1 is composed of 14 different subunits. Subunits NuoA, H, J, K, L, M, N constitute the membrane sector of the complex.

The protein resides in the cell membrane. The enzyme catalyses a quinone + NADH + 5 H(+)(in) = a quinol + NAD(+) + 4 H(+)(out). Its function is as follows. NDH-1 shuttles electrons from NADH, via FMN and iron-sulfur (Fe-S) centers, to quinones in the respiratory chain. The immediate electron acceptor for the enzyme in this species is believed to be ubiquinone. Couples the redox reaction to proton translocation (for every two electrons transferred, four hydrogen ions are translocated across the cytoplasmic membrane), and thus conserves the redox energy in a proton gradient. This subunit may bind ubiquinone. The polypeptide is NADH-quinone oxidoreductase subunit H (Anoxybacillus flavithermus (strain DSM 21510 / WK1)).